The chain runs to 366 residues: Structure-specific endonuclease subunit SLX1 (366 aa).

Positions 14-95 (AFYCCYLLRS…QNTHATRHID (82 aa)) constitute a GIY-YIG domain. 2 disordered regions span residues 31–59 (IGSTPNPARRLGQHNGSSKGGAKRTSMQG) and 102–124 (RAEELQKGKKKATSPGRRRKRPP). A compositionally biased stretch (basic residues) spans 109–123 (GKKKATSPGRRRKRP). The segment at 234–289 (CGVCKNPADMSSSLILVCPIEACQTVSHLSCLSNKFLTEGGELETLVPLEGTCPGC) adopts an SLX1-type zinc-finger fold. Residues 317-366 (KPKRKRKSDNPAESDAADGQALEQEDEELDETWMEDMSQDEEPSPVKKSR) form a disordered region. Residues 339 to 359 (EQEDEELDETWMEDMSQDEEP) show a composition bias toward acidic residues.

Belongs to the SLX1 family. Forms a heterodimer with SLX4. Requires a divalent metal cation as cofactor.

The protein resides in the nucleus. In terms of biological role, catalytic subunit of the SLX1-SLX4 structure-specific endonuclease that resolves DNA secondary structures generated during DNA repair and recombination. Has endonuclease activity towards branched DNA substrates, introducing single-strand cuts in duplex DNA close to junctions with ss-DNA. This chain is Structure-specific endonuclease subunit SLX1, found in Phaeosphaeria nodorum (strain SN15 / ATCC MYA-4574 / FGSC 10173) (Glume blotch fungus).